We begin with the raw amino-acid sequence, 260 residues long: Ribosomal RNA small subunit methyltransferase J (260 aa).

Residues Glu125–Arg126 and Asp179 each bind S-adenosyl-L-methionine.

This sequence belongs to the methyltransferase superfamily. RsmJ family.

It localises to the cytoplasm. The enzyme catalyses guanosine(1516) in 16S rRNA + S-adenosyl-L-methionine = N(2)-methylguanosine(1516) in 16S rRNA + S-adenosyl-L-homocysteine + H(+). Its function is as follows. Specifically methylates the guanosine in position 1516 of 16S rRNA. The sequence is that of Ribosomal RNA small subunit methyltransferase J from Pseudomonas fluorescens (strain Pf0-1).